The following is a 411-amino-acid chain: DSEFVELKIRGKIFKLPILKASIGEDVIDISRVSSEADCFTYDPGFMSTASCRSTITYIDGDKGILRYRGYDIKDLADKSDFLEVAYLLIYGELPSSEQYNNFTKKVAVHSLVNERLHYLFQTFCSSSHPMAIMLAAVGSLSAFYPDLLNFKEADYELTAIRMIAKIPTMAAMSYKYSIGQPFIYPDNSLDFTENFLHMMFATPCMKYEVNPVIKNALNKIFILHADHEQNASTSTVRIAGSSGANPFACISTGIASLWGPAHGGANEAVINMLKEIGSSENIPKYIAKAKDKDDPFRLMGFGHRVYKNYDPRAAVLKETCNEVLKELGQLENNPLLQIAIELEAIALKDEYFIERKLYPNVDFYSGIIYKAMGIPSQMFTVLFAIARTVGWMAQWKEMHEDPEQKISRPR.

Residues His-304 and Asp-363 contribute to the active site.

Belongs to the citrate synthase family.

The enzyme catalyses oxaloacetate + acetyl-CoA + H2O = citrate + CoA + H(+). It functions in the pathway carbohydrate metabolism; tricarboxylic acid cycle; isocitrate from oxaloacetate: step 1/2. This Rickettsia canadensis protein is Citrate synthase (gltA).